Here is a 574-residue protein sequence, read N- to C-terminus: DNA mismatch repair protein MutL (574 aa).

It belongs to the DNA mismatch repair MutL/HexB family.

In terms of biological role, this protein is involved in the repair of mismatches in DNA. It is required for dam-dependent methyl-directed DNA mismatch repair. May act as a 'molecular matchmaker', a protein that promotes the formation of a stable complex between two or more DNA-binding proteins in an ATP-dependent manner without itself being part of a final effector complex. In Coxiella burnetii (strain Dugway 5J108-111), this protein is DNA mismatch repair protein MutL.